The primary structure comprises 62 residues: Glucagon (62 aa).

Belongs to the glucagon family.

The protein localises to the secreted. In terms of biological role, promotes hydrolysis of glycogen and lipids, and raises the blood sugar level. In Scyliorhinus canicula (Small-spotted catshark), this protein is Glucagon (gcg).